Consider the following 247-residue polypeptide: Large ribosomal subunit protein uL30 (247 aa).

This sequence belongs to the universal ribosomal protein uL30 family.

The protein is Large ribosomal subunit protein uL30 (RPL7L1) of Sus scrofa (Pig).